The following is a 198-amino-acid chain: tRNA (pseudouridine(54)-N(1))-methyltransferase (198 aa).

S-adenosyl-L-methionine contacts are provided by leucine 134 and glycine 155.

This sequence belongs to the methyltransferase superfamily. TrmY family. As to quaternary structure, homodimer.

The protein resides in the cytoplasm. It catalyses the reaction pseudouridine(54) in tRNA + S-adenosyl-L-methionine = N(1)-methylpseudouridine(54) in tRNA + S-adenosyl-L-homocysteine + H(+). Functionally, specifically catalyzes the N1-methylation of pseudouridine at position 54 (Psi54) in tRNAs. This is tRNA (pseudouridine(54)-N(1))-methyltransferase from Thermococcus kodakarensis (strain ATCC BAA-918 / JCM 12380 / KOD1) (Pyrococcus kodakaraensis (strain KOD1)).